The sequence spans 366 residues: Peptide chain release factor 2 (366 aa).

Position 253 is an N5-methylglutamine (Gln253).

The protein belongs to the prokaryotic/mitochondrial release factor family. In terms of processing, methylated by PrmC. Methylation increases the termination efficiency of RF2.

Its subcellular location is the cytoplasm. Functionally, peptide chain release factor 2 directs the termination of translation in response to the peptide chain termination codons UGA and UAA. The chain is Peptide chain release factor 2 from Yersinia pseudotuberculosis serotype I (strain IP32953).